The chain runs to 362 residues: MYKLLGSLKSYLKWQDIQTDNAVFRLHNSFTTVLLLTCSLIITATQYVGQPISCIVNGVPPHVVNTFCWIHSTFTMPDAFRRQVGREVAHPGVANDFGDEDAKKYYTYYQWVCFVLFFQAMACYTPKFLWNKFEGGLMRMIVMGLNITICTREEKEAKRDALLDYLIKHVKRHKLYAIRYWACEFLCCINIIVQMYLMNRFFDGEFLSYGTNIMKLSDVPQEQRVDPMVYVFPRVTKCTFHKYGPSGSLQKHDSLCILPLNIVNEKTYVFIWFWFWILLVLLIGLIVFRGCIIFMPKFRPRLLNASNRMIPMEICRSLSRKLDIGDWWLIYMLGRNLDPVIYKDVMSEFAKQVEPSKHDRAK.

Residues 1 to 28 (MYKLLGSLKSYLKWQDIQTDNAVFRLHN) are Cytoplasmic-facing. Residues 29–49 (SFTTVLLLTCSLIITATQYVG) form a helical membrane-spanning segment. Residues 50-110 (QPISCIVNGV…DAKKYYTYYQ (61 aa)) are Extracellular-facing. The helical transmembrane segment at 111-131 (WVCFVLFFQAMACYTPKFLWN) threads the bilayer. Topologically, residues 132–177 (KFEGGLMRMIVMGLNITICTREEKEAKRDALLDYLIKHVKRHKLYA) are cytoplasmic. The helical transmembrane segment at 178–198 (IRYWACEFLCCINIIVQMYLM) threads the bilayer. Topologically, residues 199 to 267 (NRFFDGEFLS…LPLNIVNEKT (69 aa)) are extracellular. Residues 268-288 (YVFIWFWFWILLVLLIGLIVF) traverse the membrane as a helical segment. Residues 289–362 (RGCIIFMPKF…VEPSKHDRAK (74 aa)) lie on the Cytoplasmic side of the membrane.

The protein belongs to the pannexin family. Heterooligomer of Inx2 and ogre. In terms of tissue distribution, in ovary, expressed in follicle cells. Expressed around the periphery of the embryo during cellular blastoderm formation. Repeating epidermal pattern emerges from stage 11, high levels of expression detected along the borders of each segment from stage 13. At stage 13, expressed in the dorsal branch of the tracheal system. During stage 15, detected in a few cells at each of the branch points of the dorsal trunk and at low levels in cardioblasts. In embryos, also expressed in the salivary gland and the hindgut (at protein level). At stage 17, expressed in the dorsal side of the CNS. Expressed in the imaginal wing disk. Expressed in larval CNS and in tissues outside of the CNS. In pupae, expressed in the CNS and in primary, secondary and tertiary pigment cells of the retina.

The protein localises to the cell membrane. It localises to the cell junction. It is found in the gap junction. The protein resides in the basolateral cell membrane. Its function is as follows. Structural component of the gap junctions. Essential for generation and/or maintenance of postembryonic neuroblasts and normal development of optic lobe. This Drosophila melanogaster (Fruit fly) protein is Innexin inx1 (ogre).